A 380-amino-acid polypeptide reads, in one-letter code: Cytochrome b (380 aa).

A run of 4 helical transmembrane segments spans residues Phe34–Ala54, Trp78–Ile99, Trp114–Leu134, and Phe179–Thr199. Heme b contacts are provided by His84 and His98. Heme b is bound by residues His183 and His197. His202 contributes to the a ubiquinone binding site. 4 consecutive transmembrane segments (helical) span residues Leu227–Ser247, Leu289–His309, Leu321–Ser341, and Phe348–Pro368.

It belongs to the cytochrome b family. As to quaternary structure, the cytochrome bc1 complex contains 11 subunits: 3 respiratory subunits (MT-CYB, CYC1 and UQCRFS1), 2 core proteins (UQCRC1 and UQCRC2) and 6 low-molecular weight proteins (UQCRH/QCR6, UQCRB/QCR7, UQCRQ/QCR8, UQCR10/QCR9, UQCR11/QCR10 and a cleavage product of UQCRFS1). This cytochrome bc1 complex then forms a dimer. Heme b serves as cofactor.

The protein localises to the mitochondrion inner membrane. In terms of biological role, component of the ubiquinol-cytochrome c reductase complex (complex III or cytochrome b-c1 complex) that is part of the mitochondrial respiratory chain. The b-c1 complex mediates electron transfer from ubiquinol to cytochrome c. Contributes to the generation of a proton gradient across the mitochondrial membrane that is then used for ATP synthesis. This chain is Cytochrome b (MT-CYB), found in Anthropoides virgo (Demoiselle crane).